Here is a 1063-residue protein sequence, read N- to C-terminus: MALQVELIPTGEIIRVVHPHRPCKLALGSDGVRVTMESALTARDRVGVQDFVLLENFTSEAAFIENLRRRFRENLIYTYIGPVLVSVNPYRDLQIYSRQHMERYRGVSFYEVPPHLFAVADTVYRALRTERRDQAVMISGESGAGKTEATKRLLQFYAETCPAPERGGAVRDRLLQSNPVLEAFGNAKTLRNDNSSRFGKYMDVQFDFKGAPVGGHILSYLLEKSRVVHQNHGERNFHVFYQLLEGGEEETLRRLGLERNPQSYLYLVKGQCAKVSSINDKSDWKVMRKALSVIDFTEDEVEDLLSIVASVLHLGNIHFAADEDSNAQVTTENQLKYLTRLLGVEGTTLREALTHRKIIAKGEELLSPLNLEQAAYARDALAKAVYSRTFTWLVRKINRSLASKDAESPSWRSTTVLGLLDIYGFEVFQHNSFEQFCINYCNEKLQQLFIELTLKSEQEEYEAEGIAWEPVQYFNNKIICDLVEEKFKGIISILDEECLRPGEATDLTFLEKLEDTVKPHPHFLTHKLADQKTRKSLDRGEFRLLHYAGEVTYSVTGFLDKNNDLLFRNLKETMCSSMNPIMAQCFDKSELSDKKRPETVATQFKMSLLQLVEILRSKEPAYIRCIKPNDAKQPGRFDEVLIRHQVKYLGLMENLRVRRAGFAYRRKYEAFLQRYKSLCPETWPMWAGRPQDGVAVLVRHLGYKPEEYKMGRTKIFIRFPKTLFATEDSLEVRRQSLATKIQAAWRGFHWRQKFLRVKRSAICIQSWWRGTLGRRKAAKRKWAAQTIRRLIRGFILRHSPRCPENAFFLDHVRASFLLNLRRQLPRNVLDTSWPTPPPALREASELLRELCMKNMVWKYCRSISPEWKQQLQQKAVASEIFKGKKDNYPQSVPRLFISTRLGTEEISPRVLQSLGSEPIQYAVPVVKYDRKGYKPRPRQLLLTPSAVVIVEDAKVKQRIDYANLTGISVSSLSDSLFVLHVQREDNKQKGDVVLQSDHVIETLTKTALSADRVNNININQGSITFAGGPGRDGIIDFTSGSELLITKAKNGHLAVVAPRLNSR.

At Met1 the chain carries N-acetylmethionine. Thr10 carries the phosphoserine modification. A Myosin motor domain is found at 47–731 (GVQDFVLLEN…TLFATEDSLE (685 aa)). ATP-binding positions include Asn88, Tyr96, 139-148 (SGESGAGKTE), and 192-196 (NDNSS). Lys383 is subject to N6-methyllysine. Position 408 is a phosphoserine (Ser408). Lys486 carries the post-translational modification N6-acetyllysine. Ser536 carries the phosphoserine modification. Residues 608–630 (LLQLVEILRSKEPAYIRCIKPND) form an actin-binding region. IQ domains lie at 734–757 (RQSL…FLRV) and 758–786 (KRSA…AAQT). Phosphoserine is present on residues Ser864 and Ser1041. The region spanning 885 to 1059 (KDNYPQSVPR…NGHLAVVAPR (175 aa)) is the TH1 domain.

The protein belongs to the TRAFAC class myosin-kinesin ATPase superfamily. Myosin family. In terms of assembly, interacts (via its IQ motifs) with CABP1 and CIB1; the interaction with CABP1 and CIB1 is calcium-dependent. Interacts (via tail domain) with PLEKHB1 (via PH domain); the interaction is not affected by the presence or absence of calcium and CALM. Interacts with POLR1A. Interacts with POLR2A. Component of the B-WICH complex, at least composed of SMARCA5/SNF2H, BAZ1B/WSTF, SF3B1, DEK, MYO1C, ERCC6, MYBBP1A and DDX21. Interacts (via its IQ motifs) with CALM; this precludes interaction with YWHAB. Interacts with YWHAB; this precludes interaction with CALM. Interacts with RPS6. Interacts with actin. Interacts with LLPH. Interacts with GLUT4. Interacts (via its IQ motifs) with SH3BGRL3; the interaction is dependent on calcium and takes place at membrane ruffles. Post-translationally, isoform 2 contains a N-acetylmethionine at position 1. Isoform 3 is expressed in small intestine, pancreas, brain, kidney, skin, heart muscle, testis, striated muscle, spleen, liver and lung (at protein level). Expressed in brain, testis, adrenal glands, thymus, spleen, kidney, lung, heart, cochlea and vestibule. Expressed in sensory hair cells of the inner ear. Expressed in adipocytes.

The protein resides in the cytoplasm. It localises to the nucleus. Its subcellular location is the cell cortex. The protein localises to the cell projection. It is found in the stereocilium membrane. The protein resides in the cytoplasmic vesicle. It localises to the ruffle membrane. Its subcellular location is the nucleolus. The protein localises to the nucleoplasm. Its function is as follows. Myosins are actin-based motor molecules with ATPase activity. Unconventional myosins serve in intracellular movements. Their highly divergent tails bind to membranous compartments, which then are moved relative to actin filaments. Involved in glucose transporter recycling in response to insulin by regulating movement of intracellular GLUT4-containing vesicles to the plasma membrane. Component of the hair cell's (the sensory cells of the inner ear) adaptation-motor complex. Acts as a mediator of adaptation of mechanoelectrical transduction in stereocilia of vestibular hair cells. Binds phosphoinositides and links the actin cytoskeleton to cellular membranes. Involved in regulation of transcription. Associated with transcriptional active ribosomal genes. Appears to cooperate with the WICH chromatin-remodeling complex to facilitate transcription. Necessary for the formation of the first phosphodiester bond during transcription initiation. This is Unconventional myosin-Ic (Myo1c) from Mus musculus (Mouse).